We begin with the raw amino-acid sequence, 231 residues long: Probable calcium-binding protein CML21 (231 aa).

4 EF-hand domains span residues 54-89 (DGLR…LEIS), 90-125 (FDEE…VYLL), 145-180 (PTFE…SGER), and 181-216 (SSGR…WVGI). Positions 67, 69, 71, 73, and 78 each coordinate Ca(2+). Ca(2+) is bound by residues Asp-158, Asn-160, Asp-162, Tyr-164, Glu-169, Asp-194, Asp-196, Asn-198, Met-200, and Glu-205.

Potential calcium sensor. This chain is Probable calcium-binding protein CML21 (CML21), found in Arabidopsis thaliana (Mouse-ear cress).